The following is a 544-amino-acid chain: MAKQIVFNEEARRALERGVNALAESVRVTLGPKGRNVVLDKKFGAPLITNDGVTIAREIELEDPFENMGAQLVKEVATKTNDVAGDGTTTATVLAQAIIREGLKNVAAGANPMGIKRGIEKAVESVVDDIKTNAKPIESKESIAQVASISAGDDNIGVLISDAMEKVGKDGVITVEEAKGMTTELKVVEGMQFDRGYLSAYMITDTDKMEAILNDPYILITDKKIGAIADILPVLEKVVQAGRQLLIIAEDIEGEALATLILNKLRGTFTCVAVKAPGFGDRRKAMLEDIAILTGGTVITEDLGLKLENTTIDMLGRARQIRVTKEETTIVEGSGSQDDIKSRVEAIKKQIDETTSDFDREKLQERLAKLAGGVAVIQVGAATEVEMKEKKLRIEDALAATRAAVEEGIVAGGGCALVDAAKALDSLKLTGDEKTGVAIVYRALEEPLRQIANNAGFEGSIVVEKVRNGGRGVGFNALTEAYEDMIAAGIVDPAKVTRSALQNAASIAAMLLTTECLVSDIPSKDNGAAAMAGMGGMGGMGGMM.

ATP contacts are provided by residues 29–32 (TLGP), 86–90 (DGTTT), glycine 413, 476–478 (NAL), and aspartate 492.

It belongs to the chaperonin (HSP60) family. Forms a cylinder of 14 subunits composed of two heptameric rings stacked back-to-back. Interacts with the co-chaperonin GroES.

It localises to the cytoplasm. The enzyme catalyses ATP + H2O + a folded polypeptide = ADP + phosphate + an unfolded polypeptide.. Together with its co-chaperonin GroES, plays an essential role in assisting protein folding. The GroEL-GroES system forms a nano-cage that allows encapsulation of the non-native substrate proteins and provides a physical environment optimized to promote and accelerate protein folding. The sequence is that of Chaperonin GroEL from Desulfitobacterium hafniense (strain Y51).